A 520-amino-acid polypeptide reads, in one-letter code: T-box transcription factor TBX22 (520 aa).

A disordered region spans residues 1–91 (MALSSRARAF…NSSESLEEKD (91 aa)). Basic and acidic residues predominate over residues 33–49 (PELREKKGGEEEEERRS). Residues 67–84 (STSASSGCGSDSGYGNSS) are compositionally biased toward low complexity. Residues 96–283 (LQGSELWKRF…RNPFAKGFRD (188 aa)) constitute a DNA-binding region (T-box).

As to expression, seems to be expressed at a low level.

Its subcellular location is the nucleus. Its function is as follows. Probable transcriptional regulator involved in developmental processes. This is major determinant crucial to palatogenesis. This is T-box transcription factor TBX22 (TBX22) from Homo sapiens (Human).